Here is a 428-residue protein sequence, read N- to C-terminus: Histidinol dehydrogenase (428 aa).

3 residues coordinate NAD(+): Tyr-126, Gln-188, and Asn-211. Substrate-binding residues include Ser-234, Gln-256, and His-259. 2 residues coordinate Zn(2+): Gln-256 and His-259. Residues Glu-324 and His-325 each act as proton acceptor in the active site. 4 residues coordinate substrate: His-325, Asp-358, Glu-412, and His-417. Position 358 (Asp-358) interacts with Zn(2+). Position 417 (His-417) interacts with Zn(2+).

This sequence belongs to the histidinol dehydrogenase family. Zn(2+) serves as cofactor.

The catalysed reaction is L-histidinol + 2 NAD(+) + H2O = L-histidine + 2 NADH + 3 H(+). The protein operates within amino-acid biosynthesis; L-histidine biosynthesis; L-histidine from 5-phospho-alpha-D-ribose 1-diphosphate: step 9/9. In terms of biological role, catalyzes the sequential NAD-dependent oxidations of L-histidinol to L-histidinaldehyde and then to L-histidine. In Chlorobium chlorochromatii (strain CaD3), this protein is Histidinol dehydrogenase.